The following is a 391-amino-acid chain: Multidrug resistance protein MdtL (391 aa).

12 helical membrane passes run 4 to 24, 42 to 62, 69 to 89, 93 to 113, 131 to 151, 158 to 178, 203 to 222, 245 to 265, 269 to 289, 293 to 313, 331 to 351, and 356 to 376; these read FLICSFALVLLYPAGIDMYLV, IAFSVYLAGMAAAMLFAGKVA, PVAIPGAALFIIASVFCSLAE, LFLAGRFLQGLGAGCCYVVAF, LLNGITCIIPVLAPVLGHLIM, SLFWTMATMGIALLMLSLFIL, FFLSRVVITTLSVSVILTFV, ALTAGVSMTVSFSTPFALGIF, TLMITSQVLFLAAGITLAVSP, VSLFGITLICAGFSVGFGVAM, LGIAQVCGSSLWIWLAAVVGI, and MLIGILIACSIVSLLLIMFVA.

This sequence belongs to the major facilitator superfamily. DHA1 family. MdtL (TC 2.A.1.2.22) subfamily.

The protein resides in the cell inner membrane. Confers resistance to chloramphenicol. This Escherichia coli O45:K1 (strain S88 / ExPEC) protein is Multidrug resistance protein MdtL.